Here is a 117-residue protein sequence, read N- to C-terminus: MSGAESFVPAPMYLTDAAAQRLGALVEEEGNPGLKLRVYVTGGGCSGFQYGFDFADTVGDEDTIIENGTASMVVDALSYQYLVGSTVDFEEGLAGARFIIKNPNATSTCGCGASFAV.

Iron-sulfur cluster is bound by residues C45, C109, and C111.

It belongs to the HesB/IscA family. In terms of assembly, homodimer. It depends on iron-sulfur cluster as a cofactor.

Functionally, required for insertion of 4Fe-4S clusters for at least IspG. In Chromohalobacter salexigens (strain ATCC BAA-138 / DSM 3043 / CIP 106854 / NCIMB 13768 / 1H11), this protein is Iron-sulfur cluster insertion protein ErpA.